A 429-amino-acid chain; its full sequence is Probable proton-coupled zinc antiporter SLC30A4 (429 aa).

Residues Met1–Arg113 lie on the Cytoplasmic side of the membrane. The helical transmembrane segment at Leu114–Ile134 threads the bilayer. Residues Ala135–Asp143 are Lumenal-facing. The helical transmembrane segment at Ala144–Ser164 threads the bilayer. The Zn(2+) site is built by His146 and Asp150. Residues Ser165–Arg178 lie on the Cytoplasmic side of the membrane. Residues Leu179–Leu199 traverse the membrane as a helical segment. Residues Tyr200 to Asp216 are Lumenal-facing. The helical transmembrane segment at Ile217 to Asn237 threads the bilayer. The Cytoplasmic segment spans residues Gln238–Ala274. Residues Gly240–Gln264 are zinc binding. A helical membrane pass occupies residues Phe275–Ile295. Zn(2+) is bound by residues His277 and Asp281. Residues Arg296–Tyr310 are Lumenal-facing. The helical transmembrane segment at Val311–Ile331 threads the bilayer. Topologically, residues Leu332 to Ser429 are cytoplasmic.

It belongs to the cation diffusion facilitator (CDF) transporter (TC 2.A.4) family. SLC30A subfamily. In terms of assembly, homodimerization could regulate efficiency for zinc transport. Interacts with TMEM163.

The protein localises to the endosome membrane. It localises to the late endosome membrane. Its subcellular location is the lysosome membrane. The enzyme catalyses Zn(2+)(in) + 2 H(+)(out) = Zn(2+)(out) + 2 H(+)(in). Functionally, probable proton-coupled zinc ion antiporter mediating zinc import from cytoplasm potentially into the endocytic compartment. Controls zinc deposition in milk. The sequence is that of Probable proton-coupled zinc antiporter SLC30A4 from Bos taurus (Bovine).